A 166-amino-acid chain; its full sequence is ATP synthase subunit b (166 aa).

A helical membrane pass occupies residues 15 to 37; that stretch reads TLYYLLIFAALLLLVKHFAWGPV.

This sequence belongs to the ATPase B chain family. As to quaternary structure, F-type ATPases have 2 components, F(1) - the catalytic core - and F(0) - the membrane proton channel. F(1) has five subunits: alpha(3), beta(3), gamma(1), delta(1), epsilon(1). F(0) has three main subunits: a(1), b(2) and c(10-14). The alpha and beta chains form an alternating ring which encloses part of the gamma chain. F(1) is attached to F(0) by a central stalk formed by the gamma and epsilon chains, while a peripheral stalk is formed by the delta and b chains.

It localises to the cell membrane. F(1)F(0) ATP synthase produces ATP from ADP in the presence of a proton or sodium gradient. F-type ATPases consist of two structural domains, F(1) containing the extramembraneous catalytic core and F(0) containing the membrane proton channel, linked together by a central stalk and a peripheral stalk. During catalysis, ATP synthesis in the catalytic domain of F(1) is coupled via a rotary mechanism of the central stalk subunits to proton translocation. In terms of biological role, component of the F(0) channel, it forms part of the peripheral stalk, linking F(1) to F(0). This is ATP synthase subunit b from Lactobacillus gasseri (strain ATCC 33323 / DSM 20243 / BCRC 14619 / CIP 102991 / JCM 1131 / KCTC 3163 / NCIMB 11718 / NCTC 13722 / AM63).